The sequence spans 292 residues: Phosphatidylglycerol--prolipoprotein diacylglyceryl transferase (292 aa).

Transmembrane regions (helical) follow at residues 18 to 38, 67 to 87, and 105 to 125; these read LFGV…GLLI, LLTW…VLFY, and GGMS…AFCL. Position 150 (Arg150) interacts with a 1,2-diacyl-sn-glycero-3-phospho-(1'-sn-glycerol). Helical transmembrane passes span 193 to 213, 222 to 242, and 266 to 286; these read QIYE…LLVW, GSVS…VEFV, and GLTM…YLIL.

This sequence belongs to the Lgt family.

It is found in the cell inner membrane. The catalysed reaction is L-cysteinyl-[prolipoprotein] + a 1,2-diacyl-sn-glycero-3-phospho-(1'-sn-glycerol) = an S-1,2-diacyl-sn-glyceryl-L-cysteinyl-[prolipoprotein] + sn-glycerol 1-phosphate + H(+). It participates in protein modification; lipoprotein biosynthesis (diacylglyceryl transfer). Functionally, catalyzes the transfer of the diacylglyceryl group from phosphatidylglycerol to the sulfhydryl group of the N-terminal cysteine of a prolipoprotein, the first step in the formation of mature lipoproteins. In Cereibacter sphaeroides (strain ATCC 17029 / ATH 2.4.9) (Rhodobacter sphaeroides), this protein is Phosphatidylglycerol--prolipoprotein diacylglyceryl transferase.